The chain runs to 171 residues: uncharacterized protein (171 aa).

This is an uncharacterized protein from Bacillus subtilis (strain 168).